The chain runs to 707 residues: Anaerobic ribonucleoside-triphosphate reductase (707 aa).

The 92-residue stretch at 4–95 folds into the ATP-cone domain; that stretch reads FGVIKRDGSR…EYRHDRDLAR (92 aa). The Glycine radical domain maps to 584-707; it reads KKVNPYDKLD…EEVKRRVKHL (124 aa). 4 residues coordinate Zn(2+): cysteine 645, cysteine 648, cysteine 663, and cysteine 666. Glycine 682 carries the post-translational modification Glycine radical.

This sequence belongs to the anaerobic ribonucleoside-triphosphate reductase family. As to quaternary structure, forms a tetramer composed of two NrdD and two NrdG subunits.

The catalysed reaction is a ribonucleoside 5'-triphosphate + formate + H(+) = a 2'-deoxyribonucleoside 5'-triphosphate + CO2 + H2O. Activated under anaerobic conditions by NrdG, a tightly associated activase. Activation involves the formation of a glycyl radical at Gly-682. Its function is as follows. Catalyzes the conversion of ribonucleotides into deoxyribonucleotides, which are required for DNA synthesis and repair. The sequence is that of Anaerobic ribonucleoside-triphosphate reductase (nrdD) from Haemophilus influenzae (strain ATCC 51907 / DSM 11121 / KW20 / Rd).